An 870-amino-acid polypeptide reads, in one-letter code: Protein RRP6-like 2 (870 aa).

Positions 263–428 (VQEVKDLKEL…YIYDLIKLEL (166 aa)) constitute a 3'-5' exonuclease domain. One can recognise an HRDC domain in the interval 479-559 (NAAQLAIVAG…RQSMQHYAAF (81 aa)). 4 disordered regions span residues 583 to 605 (SEKKDLHTGDVASPSLKENSSQL), 649 to 668 (GALLGNAASKKKSRTDEKVK), 688 to 775 (TEKV…EDEP), and 821 to 870 (FGEG…SFKN). Composition is skewed to basic and acidic residues over residues 720–729 (SKEDGVKELK) and 821–834 (FGEGHKGRQGKREA). The segment covering 840 to 849 (KGSTQEQSEF) has biased composition (polar residues).

The protein resides in the nucleus. The protein localises to the nucleolus. Its subcellular location is the cytoplasm. Functionally, acts as an important epigenetic regulator through multiple silencing mechanisms. Involved in association with RRP6L1 in the silencing of the solo LTR locus. Controls levels of non-coding RNAs (ncRNAs) from the solo LTR locus. Seems to function independently of the RNA-mediated gene silencing (RdDM) pathway. Functions redundantly with RRP6L1 in the regulation of FLC locus. Participates in the maintenance of trimethylated 'Lys-27' (H3K27me3) at FLC locus via the regulation of antisense long non-coding RNAs (lncRNAs) and the regulation of diverse antisense RNAs derived from the FLC locus. Seems not involved in the exosomal RNA degradation. May be involved in poly(A)-mediated RNA degradation. This chain is Protein RRP6-like 2, found in Arabidopsis thaliana (Mouse-ear cress).